Reading from the N-terminus, the 333-residue chain is Ketol-acid reductoisomerase (NADP(+)) (333 aa).

Residues 6-186 (TRVYTECDAD…GALRAGAIQT (181 aa)) form the KARI N-terminal Rossmann domain. Residues 29 to 32 (YGSQ), lysine 52, serine 55, serine 57, and 87 to 90 (DPAQ) each bind NADP(+). Histidine 112 is an active-site residue. Glycine 138 lines the NADP(+) pocket. Residues 187–332 (TFTEETETDL…ARLRALFSWS (146 aa)) form the KARI C-terminal knotted domain. Residues aspartate 195, glutamate 199, glutamate 231, and glutamate 235 each contribute to the Mg(2+) site. Serine 256 contributes to the substrate binding site.

It belongs to the ketol-acid reductoisomerase family. Mg(2+) is required as a cofactor.

It carries out the reaction (2R)-2,3-dihydroxy-3-methylbutanoate + NADP(+) = (2S)-2-acetolactate + NADPH + H(+). The catalysed reaction is (2R,3R)-2,3-dihydroxy-3-methylpentanoate + NADP(+) = (S)-2-ethyl-2-hydroxy-3-oxobutanoate + NADPH + H(+). The protein operates within amino-acid biosynthesis; L-isoleucine biosynthesis; L-isoleucine from 2-oxobutanoate: step 2/4. It functions in the pathway amino-acid biosynthesis; L-valine biosynthesis; L-valine from pyruvate: step 2/4. Involved in the biosynthesis of branched-chain amino acids (BCAA). Catalyzes an alkyl-migration followed by a ketol-acid reduction of (S)-2-acetolactate (S2AL) to yield (R)-2,3-dihydroxy-isovalerate. In the isomerase reaction, S2AL is rearranged via a Mg-dependent methyl migration to produce 3-hydroxy-3-methyl-2-ketobutyrate (HMKB). In the reductase reaction, this 2-ketoacid undergoes a metal-dependent reduction by NADPH to yield (R)-2,3-dihydroxy-isovalerate. This is Ketol-acid reductoisomerase (NADP(+)) from Tropheryma whipplei (strain Twist) (Whipple's bacillus).